Consider the following 349-residue polypeptide: tRNA N6-adenosine threonylcarbamoyltransferase (349 aa).

Fe cation contacts are provided by histidine 114 and histidine 118. Residues 136-140 (IMSGG), aspartate 169, glycine 182, and asparagine 280 contribute to the substrate site. Aspartate 308 serves as a coordination point for Fe cation.

The protein belongs to the KAE1 / TsaD family. Fe(2+) is required as a cofactor.

The protein resides in the cytoplasm. The enzyme catalyses L-threonylcarbamoyladenylate + adenosine(37) in tRNA = N(6)-L-threonylcarbamoyladenosine(37) in tRNA + AMP + H(+). Its function is as follows. Required for the formation of a threonylcarbamoyl group on adenosine at position 37 (t(6)A37) in tRNAs that read codons beginning with adenine. Is involved in the transfer of the threonylcarbamoyl moiety of threonylcarbamoyl-AMP (TC-AMP) to the N6 group of A37, together with TsaE and TsaB. TsaD likely plays a direct catalytic role in this reaction. The chain is tRNA N6-adenosine threonylcarbamoyltransferase from Ehrlichia chaffeensis (strain ATCC CRL-10679 / Arkansas).